The following is an 878-amino-acid chain: Aconitate hydratase A (878 aa).

Positions 426, 492, and 495 each coordinate [4Fe-4S] cluster.

The protein belongs to the aconitase/IPM isomerase family. In terms of assembly, monomer. It depends on [4Fe-4S] cluster as a cofactor.

The enzyme catalyses citrate = D-threo-isocitrate. The catalysed reaction is (2S,3R)-3-hydroxybutane-1,2,3-tricarboxylate = 2-methyl-cis-aconitate + H2O. It participates in carbohydrate metabolism; tricarboxylic acid cycle; isocitrate from oxaloacetate: step 2/2. The protein operates within organic acid metabolism; propanoate degradation. Involved in the catabolism of short chain fatty acids (SCFA) via the tricarboxylic acid (TCA)(acetyl degradation route) and probably the 2-methylcitrate cycle I (propionate degradation route). Catalyzes the reversible isomerization of citrate to isocitrate via cis-aconitate. Could catalyze the hydration of 2-methyl-cis-aconitate to yield (2R,3S)-2-methylisocitrate. The apo form of AcnA functions as a RNA-binding regulatory protein. This Rickettsia typhi (strain ATCC VR-144 / Wilmington) protein is Aconitate hydratase A (acnA).